Consider the following 389-residue polypeptide: Chalcone synthase 1 (389 aa).

Cys164 is a catalytic residue.

The protein belongs to the thiolase-like superfamily. Chalcone/stilbene synthases family.

It carries out the reaction (E)-4-coumaroyl-CoA + 3 malonyl-CoA + 3 H(+) = 2',4,4',6'-tetrahydroxychalcone + 3 CO2 + 4 CoA. It participates in secondary metabolite biosynthesis; flavonoid biosynthesis. Functionally, the primary product of this enzyme is 4,2',4',6'-tetrahydroxychalcone (also termed naringenin-chalcone or chalcone) which can under specific conditions spontaneously isomerize into naringenin. The sequence is that of Chalcone synthase 1 (CHS1) from Cicer arietinum (Chickpea).